The following is a 129-amino-acid chain: Small ribosomal subunit protein uS8mz (129 aa).

It belongs to the universal ribosomal protein uS8 family. Component of the mitochondrial ribosome small subunit.

The protein localises to the mitochondrion. This Arabidopsis thaliana (Mouse-ear cress) protein is Small ribosomal subunit protein uS8mz (RPS15AB).